The sequence spans 100 residues: Aspartyl/glutamyl-tRNA(Asn/Gln) amidotransferase subunit C (100 aa).

The protein belongs to the GatC family. In terms of assembly, heterotrimer of A, B and C subunits.

It catalyses the reaction L-glutamyl-tRNA(Gln) + L-glutamine + ATP + H2O = L-glutaminyl-tRNA(Gln) + L-glutamate + ADP + phosphate + H(+). It carries out the reaction L-aspartyl-tRNA(Asn) + L-glutamine + ATP + H2O = L-asparaginyl-tRNA(Asn) + L-glutamate + ADP + phosphate + 2 H(+). Its function is as follows. Allows the formation of correctly charged Asn-tRNA(Asn) or Gln-tRNA(Gln) through the transamidation of misacylated Asp-tRNA(Asn) or Glu-tRNA(Gln) in organisms which lack either or both of asparaginyl-tRNA or glutaminyl-tRNA synthetases. The reaction takes place in the presence of glutamine and ATP through an activated phospho-Asp-tRNA(Asn) or phospho-Glu-tRNA(Gln). In Streptococcus uberis (strain ATCC BAA-854 / 0140J), this protein is Aspartyl/glutamyl-tRNA(Asn/Gln) amidotransferase subunit C.